Reading from the N-terminus, the 174-residue chain is NADH-ubiquinone oxidoreductase chain 6 (174 aa).

A run of 5 helical transmembrane segments spans residues 4–24 (LIIM…KHPL), 25–45 (SMGL…GIYV), 48–68 (FWFS…LFIY), 82–102 (FNLT…FFII), and 143–163 (LITL…VKIT).

This sequence belongs to the complex I subunit 6 family.

Its subcellular location is the mitochondrion membrane. The catalysed reaction is a ubiquinone + NADH + 5 H(+)(in) = a ubiquinol + NAD(+) + 4 H(+)(out). Its function is as follows. Core subunit of the mitochondrial membrane respiratory chain NADH dehydrogenase (Complex I) that is believed to belong to the minimal assembly required for catalysis. Complex I functions in the transfer of electrons from NADH to the respiratory chain. The immediate electron acceptor for the enzyme is believed to be ubiquinone. The sequence is that of NADH-ubiquinone oxidoreductase chain 6 (ND6) from Anopheles quadrimaculatus (Common malaria mosquito).